The sequence spans 377 residues: Queuine tRNA-ribosyltransferase (377 aa).

D93 (proton acceptor) is an active-site residue. Substrate-binding positions include 93–97 (DSGGF), D147, Q191, and G218. The interval 249–255 (GVGTPLD) is RNA binding. D268 serves as the catalytic Nucleophile. Residues 273-277 (TRNAR) form an RNA binding; important for wobble base 34 recognition region. 4 residues coordinate Zn(2+): C306, C308, C311, and H337.

It belongs to the queuine tRNA-ribosyltransferase family. Homodimer. Within each dimer, one monomer is responsible for RNA recognition and catalysis, while the other monomer binds to the replacement base PreQ1. The cofactor is Zn(2+).

It catalyses the reaction 7-aminomethyl-7-carbaguanine + guanosine(34) in tRNA = 7-aminomethyl-7-carbaguanosine(34) in tRNA + guanine. The protein operates within tRNA modification; tRNA-queuosine biosynthesis. Catalyzes the base-exchange of a guanine (G) residue with the queuine precursor 7-aminomethyl-7-deazaguanine (PreQ1) at position 34 (anticodon wobble position) in tRNAs with GU(N) anticodons (tRNA-Asp, -Asn, -His and -Tyr). Catalysis occurs through a double-displacement mechanism. The nucleophile active site attacks the C1' of nucleotide 34 to detach the guanine base from the RNA, forming a covalent enzyme-RNA intermediate. The proton acceptor active site deprotonates the incoming PreQ1, allowing a nucleophilic attack on the C1' of the ribose to form the product. After dissociation, two additional enzymatic reactions on the tRNA convert PreQ1 to queuine (Q), resulting in the hypermodified nucleoside queuosine (7-(((4,5-cis-dihydroxy-2-cyclopenten-1-yl)amino)methyl)-7-deazaguanosine). This is Queuine tRNA-ribosyltransferase from Oleidesulfovibrio alaskensis (strain ATCC BAA-1058 / DSM 17464 / G20) (Desulfovibrio alaskensis).